Consider the following 501-residue polypeptide: Cytochrome P450 monooxygenase janQ (501 aa).

A helical membrane pass occupies residues 1 to 16 (MVLGLLAFIWLMRAWR). N132 carries N-linked (GlcNAc...) asparagine glycosylation. Residue C439 coordinates heme.

This sequence belongs to the cytochrome P450 family. Requires heme as cofactor.

It is found in the membrane. It functions in the pathway secondary metabolite biosynthesis. In terms of biological role, cytochrome P450 monooxygenase; part of the gene cluster that mediates the biosynthesis of the indole diterpenes janthitremanes such as shearinine K or shearinine A. The geranylgeranyl diphosphate (GGPP) synthase janG catalyzes the first step in janthitremane biosynthesis via conversion of farnesyl pyrophosphate and isopentyl pyrophosphate into geranylgeranyl pyrophosphate (GGPP). Condensation of indole-3-glycerol phosphate with GGPP by the prenyl transferase janC then forms 3-geranylgeranylindole (3-GGI). Epoxidation by the FAD-dependent monooxygenase janM leads to a epoxidized-GGI that is substrate of the terpene cyclase janB for cyclization to yield paspaline. Paspaline is subsequently converted to 13-desoxypaspaline by the cytochrome P450 monooxygenase janP, via beta-PC-M6 in a series of alpha-face oxidations. The cytochrome P450 monooxygenase janQ is proposed to carry out sequential beta-face oxidation steps at C-7 and C-13 of 13-desoxypaspaline to form paspalicine and paspalinine respectively. The indole diterpene prenyltransferase janD may then convert paspalinine into shearinine K which is substrate of janO and/or additional enzymes for oxidation and cyclization to generate shearinine A. In Penicillium janthinellum (Penicillium vitale), this protein is Cytochrome P450 monooxygenase janQ.